Consider the following 290-residue polypeptide: GTPase Era (290 aa).

In terms of domain architecture, Era-type G spans 2–168 (KVCIISILGR…IEILKEYAYN (167 aa)). The G1 stretch occupies residues 10–17 (GRPNVGKS). 10 to 17 (GRPNVGKS) is a binding site for GTP. Residues 36–40 (QTTRD) are G2. The tract at residues 57-60 (DTPG) is G3. GTP-binding positions include 57–61 (DTPGI) and 118–121 (SKID). The segment at 118–121 (SKID) is G4. Residues 147–149 (VSN) are G5. Residues 199 to 275 (LTDELPHSIA…TLNLKVKVSN (77 aa)) enclose the KH type-2 domain.

Belongs to the TRAFAC class TrmE-Era-EngA-EngB-Septin-like GTPase superfamily. Era GTPase family. As to quaternary structure, monomer.

The protein localises to the cytoplasm. Its subcellular location is the cell membrane. In terms of biological role, an essential GTPase that binds both GDP and GTP, with rapid nucleotide exchange. Plays a role in 16S rRNA processing and 30S ribosomal subunit biogenesis and possibly also in cell cycle regulation and energy metabolism. The sequence is that of GTPase Era from Mycoplasmopsis agalactiae (strain NCTC 10123 / CIP 59.7 / PG2) (Mycoplasma agalactiae).